The chain runs to 262 residues: Proenkephalin-A-A (262 aa).

Residues 1–24 (MGLEARHCCMFLLVFASLSVEIRA) form the signal peptide. Intrachain disulfides connect Cys26/Cys48, Cys30/Cys52, and Cys33/Cys65. Propeptides lie at residues 110–131 (MDEL…LAKN), 139–177 (EYDS…GEIN), 190–201 (STDLEDETSGIQ), 211–221 (VGRPEWWEDYQ), and 229–253 (TRFT…PDME).

Belongs to the opioid neuropeptide precursor family. The N-terminal domain contains 6 conserved cysteines thought to be involved in disulfide bonding and/or processing.

The protein resides in the secreted. In terms of biological role, enkephalin neuropeptides compete with and mimic the effects of opiate drugs. They play a role in a number of physiologic functions, including pain perception and responses to stress. This Xenopus laevis (African clawed frog) protein is Proenkephalin-A-A (penk-a).